The primary structure comprises 383 residues: Acetylornithine deacetylase (383 aa).

A Zn(2+)-binding site is contributed by His80. Asp82 is an active-site residue. Asp112 contacts Zn(2+). The active site involves Glu144. Zn(2+) is bound by residues Glu145, Glu169, and His355.

The protein belongs to the peptidase M20A family. ArgE subfamily. Homodimer. Requires Zn(2+) as cofactor. It depends on Co(2+) as a cofactor. Glutathione serves as cofactor.

Its subcellular location is the cytoplasm. The catalysed reaction is N(2)-acetyl-L-ornithine + H2O = L-ornithine + acetate. The protein operates within amino-acid biosynthesis; L-arginine biosynthesis; L-ornithine from N(2)-acetyl-L-ornithine (linear): step 1/1. Catalyzes the hydrolysis of the amide bond of N(2)-acetylated L-amino acids. Cleaves the acetyl group from N-acetyl-L-ornithine to form L-ornithine, an intermediate in L-arginine biosynthesis pathway, and a branchpoint in the synthesis of polyamines. The sequence is that of Acetylornithine deacetylase from Escherichia coli O8 (strain IAI1).